Consider the following 96-residue polypeptide: Large ribosomal subunit protein bL28 (96 aa).

Residues 1–21 (MSRVCELTGKGPMTGNNVSHA) form a disordered region.

The protein belongs to the bacterial ribosomal protein bL28 family.

The chain is Large ribosomal subunit protein bL28 from Jannaschia sp. (strain CCS1).